Reading from the N-terminus, the 279-residue chain is Movement protein (279 aa).

Residues 246–279 are disordered; it reads SESEELNVESPPAAIGSSSASRSEAFRPQVVNGL. Residues 254–268 are compositionally biased toward low complexity; the sequence is ESPPAAIGSSSASRS.

This sequence belongs to the cucumovirus movement protein family.

It localises to the host cell junction. Its subcellular location is the host plasmodesma. Its function is as follows. Transports viral genome to neighboring plant cells directly through plasmosdesmata, without any budding. The movement protein allows efficient cell to cell propagation, by bypassing the host cell wall barrier. Acts by forming a tubular structure at the host plasmodesmata, enlarging it enough to allow free passage of virion capsids. The sequence is that of Movement protein from Cucumis sativus (Cucumber).